A 104-amino-acid chain; its full sequence is MSAIQGIEGVISLLQATAMSARAQDSLPQPTISFAGQLHAALDRISDTQTAARTQAEKFTLGEPGVALNDVMTDMQKASVSMQMGIQVRNKLVAAYQEVMSMQV.

This sequence belongs to the FliE family.

It localises to the bacterial flagellum basal body. The sequence is that of Flagellar hook-basal body complex protein FliE from Escherichia coli O139:H28 (strain E24377A / ETEC).